Consider the following 156-residue polypeptide: MPRRGPVAKRDVLPDPIYNSKLVTRLINKIMIDGKKSKAQKILYTAFDIIRERTGKDPMEVFEQALKNVMPVLEVRARRVGGANYQVPVEVRPDRRVSLGLRWLVQYSRLRGEKTMEERLANEIMDAANNTGAAVKKREDTHKMAEANKAFAHYRW.

It belongs to the universal ribosomal protein uS7 family. Part of the 30S ribosomal subunit. Contacts proteins S9 and S11.

Functionally, one of the primary rRNA binding proteins, it binds directly to 16S rRNA where it nucleates assembly of the head domain of the 30S subunit. Is located at the subunit interface close to the decoding center, probably blocks exit of the E-site tRNA. The polypeptide is Small ribosomal subunit protein uS7 (Geobacillus thermodenitrificans (strain NG80-2)).